The following is a 150-amino-acid chain: Deoxyuridine 5'-triphosphate nucleotidohydrolase (150 aa).

Substrate contacts are provided by residues 69–71, Asn82, 86–88, and Lys96; these read RSG and TID.

This sequence belongs to the dUTPase family. Mg(2+) serves as cofactor.

It carries out the reaction dUTP + H2O = dUMP + diphosphate + H(+). The protein operates within pyrimidine metabolism; dUMP biosynthesis; dUMP from dCTP (dUTP route): step 2/2. In terms of biological role, this enzyme is involved in nucleotide metabolism: it produces dUMP, the immediate precursor of thymidine nucleotides and it decreases the intracellular concentration of dUTP so that uracil cannot be incorporated into DNA. This chain is Deoxyuridine 5'-triphosphate nucleotidohydrolase, found in Aquifex aeolicus (strain VF5).